A 116-amino-acid polypeptide reads, in one-letter code: NADH-ubiquinone oxidoreductase chain 3 (116 aa).

3 helical membrane passes run 3–23 (LITT…TISF), 56–76 (FFLI…LLPL), and 85–105 (PALT…GLIY).

The protein belongs to the complex I subunit 3 family.

The protein localises to the mitochondrion membrane. It catalyses the reaction a ubiquinone + NADH + 5 H(+)(in) = a ubiquinol + NAD(+) + 4 H(+)(out). Core subunit of the mitochondrial membrane respiratory chain NADH dehydrogenase (Complex I) that is believed to belong to the minimal assembly required for catalysis. Complex I functions in the transfer of electrons from NADH to the respiratory chain. The immediate electron acceptor for the enzyme is believed to be ubiquinone. The sequence is that of NADH-ubiquinone oxidoreductase chain 3 (MT-ND3) from Oncorhynchus masou (Cherry salmon).